The primary structure comprises 150 residues: Large ribosomal subunit protein bL9 (150 aa).

The protein belongs to the bacterial ribosomal protein bL9 family.

Binds to the 23S rRNA. This is Large ribosomal subunit protein bL9 from Sodalis glossinidius (strain morsitans).